Reading from the N-terminus, the 721-residue chain is Teichoic acid poly(glycerol phosphate) polymerase (721 aa).

CDP-glycerol is bound by residues 443–447, Arg511, 545–546, 582–584, 624–625, and Asp629; these read WHGTP, PT, RMH, and SS.

Belongs to the CDP-glycerol glycerophosphotransferase family.

Its subcellular location is the cell membrane. It carries out the reaction 4-O-[(2R)-glycerylphospho]-N-acetyl-beta-D-mannosaminyl-(1-&gt;4)-N-acetyl-alpha-D-glucosaminyl di-trans,octa-cis-undecaprenyl diphosphate + n CDP-glycerol = 4-O-{[(2R)-1-glycerylphospho](n)-(2R)-1-glycerylphospho}-N-acetyl-beta-D-mannosaminyl-(1-&gt;4)-N-acetyl-alpha-D-glucosaminyl undecaprenyl diphosphate + n CMP + n H(+). The protein operates within cell wall biogenesis; poly(glycerol phosphate) teichoic acid biosynthesis. Its function is as follows. Responsible for the polymerization of the main chain of the major teichoic acid by sequential transfer of glycerol phosphate units from CDP-glycerol to the disaccharide linkage unit. Synthesizes polymers of approximately 35 glycerol phosphate units in length. This is Teichoic acid poly(glycerol phosphate) polymerase from Staphylococcus epidermidis (strain ATCC 35984 / DSM 28319 / BCRC 17069 / CCUG 31568 / BM 3577 / RP62A).